Reading from the N-terminus, the 102-residue chain is Co-chaperonin GroES (102 aa).

This sequence belongs to the GroES chaperonin family. In terms of assembly, heptamer of 7 subunits arranged in a ring. Interacts with the chaperonin GroEL.

The protein localises to the cytoplasm. In terms of biological role, together with the chaperonin GroEL, plays an essential role in assisting protein folding. The GroEL-GroES system forms a nano-cage that allows encapsulation of the non-native substrate proteins and provides a physical environment optimized to promote and accelerate protein folding. GroES binds to the apical surface of the GroEL ring, thereby capping the opening of the GroEL channel. This Chlamydia trachomatis serovar D (strain ATCC VR-885 / DSM 19411 / UW-3/Cx) protein is Co-chaperonin GroES.